A 305-amino-acid polypeptide reads, in one-letter code: Tyrosine recombinase XerD (305 aa).

Residues methionine 9–histidine 94 enclose the Core-binding (CB) domain. Residues arginine 115–serine 299 enclose the Tyr recombinase domain. Catalysis depends on residues arginine 155, lysine 179, histidine 251, arginine 254, and histidine 277. The active-site O-(3'-phospho-DNA)-tyrosine intermediate is the tyrosine 286.

It belongs to the 'phage' integrase family. XerD subfamily. Forms a cyclic heterotetrameric complex composed of two molecules of XerC and two molecules of XerD.

The protein resides in the cytoplasm. In terms of biological role, site-specific tyrosine recombinase, which acts by catalyzing the cutting and rejoining of the recombining DNA molecules. The XerC-XerD complex is essential to convert dimers of the bacterial chromosome into monomers to permit their segregation at cell division. It also contributes to the segregational stability of plasmids. The polypeptide is Tyrosine recombinase XerD (Vibrio vulnificus (strain CMCP6)).